A 328-amino-acid chain; its full sequence is Diacetylchitobiose uptake system permease protein DasB (328 aa).

Positions 1 to 27 (MTVQTERPPSGPSDVRKADGGGTGGTR) are disordered. Transmembrane regions (helical) follow at residues 36 to 56 (ALAP…LLGW), 104 to 124 (IIFT…IGLL), 134 to 154 (FVLM…ATTV), 188 to 208 (FSTF…FVAI), 247 to 267 (FLYA…VQVY), and 297 to 317 (MGAA…AYYL). In terms of domain architecture, ABC transmembrane type-1 spans 100-316 (TVRSIIFTAV…LILLGLTAYY (217 aa)).

It belongs to the binding-protein-dependent transport system permease family. As to quaternary structure, the complex is composed of two ATP-binding proteins (MsiK), two transmembrane proteins (DasB and DasC) and a solute-binding protein (DasA).

Its subcellular location is the cell membrane. Part of the ABC transporter complex DasABC-MsiK involved in N,N'-diacetylchitobiose ((GlcNAc)2) uptake. Responsible for the translocation of the substrate across the membrane. The sequence is that of Diacetylchitobiose uptake system permease protein DasB from Streptomyces coelicolor (strain ATCC BAA-471 / A3(2) / M145).